Consider the following 482-residue polypeptide: UDP-N-acetylmuramate--L-alanine ligase (482 aa).

Gly-119–Thr-125 contacts ATP.

It belongs to the MurCDEF family.

Its subcellular location is the cytoplasm. The catalysed reaction is UDP-N-acetyl-alpha-D-muramate + L-alanine + ATP = UDP-N-acetyl-alpha-D-muramoyl-L-alanine + ADP + phosphate + H(+). It functions in the pathway cell wall biogenesis; peptidoglycan biosynthesis. Its function is as follows. Cell wall formation. This chain is UDP-N-acetylmuramate--L-alanine ligase, found in Cyanothece sp. (strain PCC 7425 / ATCC 29141).